Reading from the N-terminus, the 208-residue chain is Protein-L-isoaspartate O-methyltransferase (208 aa).

Residue Ser-59 is part of the active site.

Belongs to the methyltransferase superfamily. L-isoaspartyl/D-aspartyl protein methyltransferase family.

The protein resides in the cytoplasm. The enzyme catalyses [protein]-L-isoaspartate + S-adenosyl-L-methionine = [protein]-L-isoaspartate alpha-methyl ester + S-adenosyl-L-homocysteine. In terms of biological role, catalyzes the methyl esterification of L-isoaspartyl residues in peptides and proteins that result from spontaneous decomposition of normal L-aspartyl and L-asparaginyl residues. It plays a role in the repair and/or degradation of damaged proteins. This Escherichia coli O7:K1 (strain IAI39 / ExPEC) protein is Protein-L-isoaspartate O-methyltransferase.